Consider the following 234-residue polypeptide: Nitroreductase NfnB (234 aa).

25 to 29 (RRAVR) contributes to the FMN binding site. 4 residues coordinate NADP(+): S55, R105, Y113, and I118. FMN is bound by residues Y137, 181 to 182 (AL), and R223.

This sequence belongs to the nitroreductase family. In terms of assembly, homodimer. FMN is required as a cofactor.

Confers resistance to antitubercular drugs benzothiazinone (BTZ) and dinitrobenzamide (DNB). Inactivates BTZ and DNB by reducing an essential nitro group of these compounds to amino group or to hydroxyl amine, respectively, using NADH or NADPH as source of reducing equivalents; two electrons are transferred. Able to reduce the nitro group of bicyclic nitroimidazole PA-824, but not of quinone menadione, nitrofurazone, methyl-4-nitrobenzoate, 4-nitrobenzene methyl sulfonate or 4-nitroacetophenone. The protein is Nitroreductase NfnB of Mycolicibacterium smegmatis (strain ATCC 700084 / mc(2)155) (Mycobacterium smegmatis).